A 178-amino-acid chain; its full sequence is PRA1 family protein 2 (178 aa).

Residues 1 to 41 are Cytoplasmic-facing; sequence MSEVRLPPLRALDDFVLGSARLAAPDPCDPQRWCHRVINNL. The chain crosses the membrane as a helical span at residues 42-62; that stretch reads LYYQTNYLLCFGIGLALAGYV. The Extracellular portion of the chain corresponds to 63–64; the sequence is RP. A helical transmembrane segment spans residues 65-85; that stretch reads LHTLLSALVVAVALGVLVWAA. The Cytoplasmic portion of the chain corresponds to 86-96; the sequence is ETRAAVRRCRR. Residues 97-119 traverse the membrane as a helical segment; that stretch reads SHPAACLAAVLAVGLLVLWVAGG. Over 120-122 the chain is Extracellular; sequence ACT. The chain crosses the membrane as a helical span at residues 123 to 140; it reads FLFSIAGPVLLILVHASL. The Cytoplasmic portion of the chain corresponds to 141–178; the sequence is RLRNLKNKIENKIESIGLKRTPMGLLLEALGQEQEAGS.

Belongs to the PRA1 family. In terms of assembly, interacts with CCR5 and GDE1. Strong expression in the brain, small intestine, lung, spleen, and pancreas as well as in tumor tissues of the breast, colon, lung and ovary, with a weaker expression in normal tissues of the same patient. High expression in neuroblastic tumors. Strongly expressed in Purkinje cells and more moderately in cells of the molecular and the granular layers in the cerebellum. Detected in neuronal cells, but not in non-neuronal cells in the cerebral cortex, hippocampus, and lateral ventricles.

The protein resides in the endosome membrane. Functionally, may be involved in ER/Golgi transport and vesicular traffic. Plays a proapoptotic role in cerulenin-induced neuroblastoma apoptosis. The protein is PRA1 family protein 2 (PRAF2) of Homo sapiens (Human).